The following is a 326-amino-acid chain: mRNA decay activator protein ZFP36 (326 aa).

The interval 1-15 (MDLTAIYESLLSLSP) is necessary for nuclear export. Positions 1-100 (MDLTAIYESL…PTSPTATSTT (100 aa)) are necessary and sufficient for the association with mRNA decay enzymes and mRNA decay activation. 2 necessary for localization of ARE-containing mRNAs to processing bodies (PBs) regions span residues 1 to 174 (MDLT…DLAA) and 100 to 326 (TPSR…SVSE). A disordered region spans residues 13–66 (LSPDVPVPSDHGGTESSPGWGSSGPWSLSPSDSSPSGVTSRLPGRSTSLVEGRS). A compositionally biased stretch (low complexity) spans 28 to 49 (SSPGWGSSGPWSLSPSDSSPSG). Serine 60 bears the Phosphoserine; by MAPKAPK2 mark. Residue serine 66 is modified to Phosphoserine. One copy of the P-P-P-P-G repeat lies at 71-75 (PPPPG). The segment at 78–102 (PLAPRLGPELSPSPTSPTATSTTPS) is disordered. Phosphoserine is present on residues serine 88 and serine 90. Residue threonine 92 is modified to Phosphothreonine. A Phosphoserine modification is found at serine 93. Residues 95–168 (TATSTTPSRY…GSRCHFIHNP (74 aa)) are necessary for nuclear localization. Positions 97-173 (TSTTPSRYKT…FIHNPSEDLA (77 aa)) are necessary for RNA-binding. 2 C3H1-type zinc fingers span residues 103–131 (RYKTELCRTFSESGRCRYGAKCQFAHGLG) and 141–169 (KYKTELCHKFYLQGRCPYGSRCHFIHNPS). The necessary for interaction with PABPN1 stretch occupies residues 103-194 (RYKTELCRTF…ISFSGLPSGR (92 aa)). The residue at position 169 (serine 169) is a Phosphoserine. The interval 174-326 (APGHPPVLRQ…PIFNRISVSE (153 aa)) is necessary for mRNA decay activation. 2 disordered regions span residues 175–245 (PGHP…RRDP) and 273–292 (SVQSLGSDPDEYASSGSSLG). The residue at position 186 (serine 186) is a Phosphoserine; by MAPKAPK2. Serine 197 bears the Phosphoserine mark. The stretch at 198–202 (PPPPG) is one P-P-P-P-G repeat. Residues 204 to 216 (AGPSLSSSSFSPS) are compositionally biased toward low complexity. A Phosphoserine modification is found at serine 218. One copy of the P-P-P-P-G repeat lies at 219 to 223 (PPPPG). The residue at position 228 (serine 228) is a Phosphoserine; by MAPK1; in vitro. Phosphoserine occurs at positions 276, 296, and 323. The tract at residues 312-326 (APRRLPIFNRISVSE) is interaction with CNOT1.

Associates with cytoplasmic CCR4-NOT and PAN2-PAN3 deadenylase complexes to trigger ARE-containing mRNA deadenylation and decay processes. Part of a mRNA decay activation complex at least composed of poly(A)-specific exoribonucleases CNOT6, EXOSC2 and XRN1 and mRNA-decapping enzymes DCP1A and DCP2. Associates with the RNA exosome complex. Interacts (via phosphorylated form) with 14-3-3 proteins; these interactions promote exclusion of ZFP36 from cytoplasmic stress granules in response to arsenite treatment in a MAPKAPK2-dependent manner and does not prevent CCR4-NOT deadenylase complex recruitment or ZFP36-induced ARE-containing mRNA deadenylation and decay processes. Interacts with 14-3-3 proteins; these interactions occur in response to rapamycin in an Akt-dependent manner. Interacts with AGO2 and AGO4. Interacts (via C-terminus) with CNOT1; this interaction occurs in a RNA-independent manner and induces mRNA deadenylation. Interacts (via N-terminus) with CNOT6. Interacts with CNOT6L. Interacts (via C-terminus) with CNOT7; this interaction occurs in a RNA-independent manner, induces mRNA deadenylation and is inhibited in a phosphorylation MAPKAPK2-dependent manner. Interacts (via unphosphorylated form) with CNOT8; this interaction occurs in a RNA-independent manner and is inhibited in a phosphorylation MAPKAPK2-dependent manner. Interacts with DCP1A. Interacts (via N-terminus) with DCP2. Interacts with EDC3. Interacts (via N-terminus) with EXOSC2. Interacts with heat shock 70 kDa proteins. Interacts with KHSRP; this interaction increases upon cytokine-induced treatment. Interacts with MAP3K4; this interaction enhances the association with SH3KBP1/CIN85. Interacts with MAPKAPK2; this interaction occurs upon skeletal muscle satellite cell activation. Interacts with NCL. Interacts with NUP214; this interaction increases upon lipopolysaccharide (LPS) stimulation. Interacts with PABPC1; this interaction occurs in a RNA-dependent manner. Interacts (via hypophosphorylated form) with PABPN1 (via RRM domain and C-terminal arginine-rich region); this interaction occurs in the nucleus in a RNA-independent manner, decreases in presence of single-stranded poly(A) RNA-oligomer and in a p38 MAPK-dependent-manner and inhibits nuclear poly(A) tail synthesis. Interacts with PAN2. Interacts (via C3H1-type zinc finger domains) with PKM. Interacts (via C3H1-type zinc finger domains) with nuclear RNA poly(A) polymerase. Interacts with PPP2CA; this interaction occurs in LPS-stimulated cells and induces ZFP36 dephosphorylation, and hence may promote ARE-containing mRNAs decay. Interacts (via C-terminus) with PRR5L (via C-terminus); this interaction may accelerate ZFP36-mediated mRNA decay during stress. Interacts (via C-terminus) with SFN; this interaction occurs in a phosphorylation-dependent manner. Interacts (via extreme C-terminal region) with SH3KBP1/CIN85 (via SH3 domains); this interaction enhances MAP3K4-induced phosphorylation of ZFP36 at Ser-66 and Ser-93 and does not alter neither ZFP36 binding to ARE-containing transcripts nor TNF-alpha mRNA decay. Interacts with XRN1. Interacts (via C-terminus and Ser-186 phosphorylated form) with YWHAB; this interaction occurs in a p38/MAPKAPK2-dependent manner, increases cytoplasmic localization of ZFP36 and protects ZFP36 from Ser-186 dephosphorylation by serine/threonine phosphatase 2A, and hence may be crucial for stabilizing ARE-containing mRNAs. Interacts (via phosphorylated form) with YWHAE. Interacts (via C-terminus) with YWHAG; this interaction occurs in a phosphorylation-dependent manner. Interacts with YWHAH; this interaction occurs in a phosphorylation-dependent manner. Interacts with YWHAQ; this interaction occurs in a phosphorylation-dependent manner. Interacts with (via C-terminus) YWHAZ; this interaction occurs in a phosphorylation-dependent manner. Interacts (via P-P-P-P-G repeats) with GIGYF2; the interaction is direct. As to quaternary structure, (Microbial infection) Interacts (via C-terminus) with HTLV-1 TAX (via C-terminus); this interaction inhibits HTLV-1 TAX to transactivate viral long terminal repeat (LTR) promoter. Phosphorylated. Phosphorylation at serine and/or threonine residues occurs in a p38 MAPK- and MAPKAPK2-dependent manner. Phosphorylated by MAPKAPK2 at Ser-60 and Ser-186; phosphorylation increases its stability and cytoplasmic localization, promotes binding to 14-3-3 adapter proteins and inhibits the recruitment of cytoplasmic CCR4-NOT and PAN2-PAN3 deadenylase complexes to the mRNA decay machinery, thereby inhibiting ZFP36-induced ARE-containing mRNA deadenylation and decay processes. Phosphorylation by MAPKAPK2 does not impair ARE-containing RNA-binding. Phosphorylated in a MAPKAPK2- and p38 MAPK-dependent manner upon skeletal muscle satellite cell activation; this phosphorylation inhibits ZFP36-mediated mRNA decay activity, and hence stabilizes MYOD1 mRNA. Phosphorylated by MAPK1 upon mitogen stimulation. Phosphorylated at Ser-66 and Ser-93; these phosphorylations increase in a SH3KBP1-dependent manner. Phosphorylated at serine and threonine residues in a pyruvate kinase PKM- and p38 MAPK-dependent manner. Phosphorylation at Ser-60 may participate in the PKM-mediated degradation of ZFP36 in a p38 MAPK-dependent manner. Dephosphorylated by serine/threonine phosphatase 2A at Ser-186. In terms of processing, ubiquitinated; pyruvate kinase (PKM)-dependent ubiquitination leads to proteasomal degradation through a p38 MAPK signaling pathway. In terms of tissue distribution, expressed in both basal and suprabasal epidermal layers. Expressed in epidermal keratinocytes. Expressed strongly in mature dendritic cells. Expressed in immature dendritic cells (at protein level).

It is found in the nucleus. The protein localises to the cytoplasm. Its subcellular location is the cytoplasmic granule. It localises to the P-body. Zinc-finger RNA-binding protein that destabilizes several cytoplasmic AU-rich element (ARE)-containing mRNA transcripts by promoting their poly(A) tail removal or deadenylation, and hence provide a mechanism for attenuating protein synthesis. Acts as an 3'-untranslated region (UTR) ARE mRNA-binding adapter protein to communicate signaling events to the mRNA decay machinery. Recruits deadenylase CNOT7 (and probably the CCR4-NOT complex) via association with CNOT1, and hence promotes ARE-mediated mRNA deadenylation. Functions also by recruiting components of the cytoplasmic RNA decay machinery to the bound ARE-containing mRNAs. Self regulates by destabilizing its own mRNA. Binds to 3'-UTR ARE of numerous mRNAs and of its own mRNA. Plays a role in anti-inflammatory responses; suppresses tumor necrosis factor (TNF)-alpha production by stimulating ARE-mediated TNF-alpha mRNA decay and several other inflammatory ARE-containing mRNAs in interferon (IFN)- and/or lipopolysaccharide (LPS)-induced macrophages. Also plays a role in the regulation of dendritic cell maturation at the post-transcriptional level, and hence operates as part of a negative feedback loop to limit the inflammatory response. Promotes ARE-mediated mRNA decay of hypoxia-inducible factor HIF1A mRNA during the response of endothelial cells to hypoxia. Positively regulates early adipogenesis of preadipocytes by promoting ARE-mediated mRNA decay of immediate early genes (IEGs). Negatively regulates hematopoietic/erythroid cell differentiation by promoting ARE-mediated mRNA decay of the transcription factor STAT5B mRNA. Plays a role in maintaining skeletal muscle satellite cell quiescence by promoting ARE-mediated mRNA decay of the myogenic determination factor MYOD1 mRNA. Associates also with and regulates the expression of non-ARE-containing target mRNAs at the post-transcriptional level, such as MHC class I mRNAs. Participates in association with argonaute RISC catalytic components in the ARE-mediated mRNA decay mechanism; assists microRNA (miRNA) targeting ARE-containing mRNAs. May also play a role in the regulation of cytoplasmic mRNA decapping; enhances decapping of ARE-containing RNAs, in vitro. Involved in the delivery of target ARE-mRNAs to processing bodies (PBs). In addition to its cytosolic mRNA-decay function, affects nuclear pre-mRNA processing. Negatively regulates nuclear poly(A)-binding protein PABPN1-stimulated polyadenylation activity on ARE-containing pre-mRNA during LPS-stimulated macrophages. Also involved in the regulation of stress granule (SG) and P-body (PB) formation and fusion. Plays a role in the regulation of keratinocyte proliferation, differentiation and apoptosis. Plays a role as a tumor suppressor by inhibiting cell proliferation in breast cancer cells. In terms of biological role, (Microbial infection) Negatively regulates HTLV-1 TAX-dependent transactivation of viral long terminal repeat (LTR) promoter. This is mRNA decay activator protein ZFP36 from Homo sapiens (Human).